The following is a 100-amino-acid chain: Class II hydrophobin FOXG_02746 (100 aa).

The signal sequence occupies residues 1-17; that stretch reads MQFYTIVSLFLAGTAYA. 4 cysteine pairs are disulfide-bonded: Cys29–Cys79, Cys40–Cys70, Cys41–Cys53, and Cys80–Cys92.

It belongs to the cerato-ulmin hydrophobin family. Homodimer. Homodimers further self-assemble to form highly ordered films at water-air interfaces through intermolecular interactions.

It localises to the secreted. The protein resides in the cell wall. Functionally, aerial growth, conidiation, and dispersal of filamentous fungi in the environment rely upon a capability of their secreting small amphipathic proteins called hydrophobins (HPBs) with low sequence identity. Class I can self-assemble into an outermost layer of rodlet bundles on aerial cell surfaces, conferring cellular hydrophobicity that supports fungal growth, development and dispersal; whereas Class II form highly ordered films at water-air interfaces through intermolecular interactions but contribute nothing to the rodlet structure. FOXG_02746 is a class II hydrophobin that is likely required for plant colonization. In Fusarium oxysporum f. sp. lycopersici (strain 4287 / CBS 123668 / FGSC 9935 / NRRL 34936) (Fusarium vascular wilt of tomato), this protein is Class II hydrophobin FOXG_02746.